The chain runs to 309 residues: Malate dehydrogenase (309 aa).

NAD(+)-binding positions include 10–15 (GAGNVG) and Asp34. Residues Arg83 and Arg89 each coordinate substrate. Residues Asn96 and 119 to 121 (VTN) each bind NAD(+). Positions 121 and 152 each coordinate substrate. His176 serves as the catalytic Proton acceptor.

The protein belongs to the LDH/MDH superfamily. MDH type 3 family.

It catalyses the reaction (S)-malate + NAD(+) = oxaloacetate + NADH + H(+). Functionally, catalyzes the reversible oxidation of malate to oxaloacetate. The chain is Malate dehydrogenase from Desulforudis audaxviator (strain MP104C).